A 231-amino-acid polypeptide reads, in one-letter code: Large ribosomal subunit protein uL1 (231 aa).

Belongs to the universal ribosomal protein uL1 family. As to quaternary structure, part of the 50S ribosomal subunit.

Binds directly to 23S rRNA. The L1 stalk is quite mobile in the ribosome, and is involved in E site tRNA release. Its function is as follows. Protein L1 is also a translational repressor protein, it controls the translation of the L11 operon by binding to its mRNA. The polypeptide is Large ribosomal subunit protein uL1 (Pseudomonas syringae pv. syringae (strain B728a)).